The chain runs to 142 residues: 3-hydroxyacyl-[acyl-carrier-protein] dehydratase FabZ (142 aa).

H41 is an active-site residue.

It belongs to the thioester dehydratase family. FabZ subfamily.

The protein localises to the cytoplasm. It carries out the reaction a (3R)-hydroxyacyl-[ACP] = a (2E)-enoyl-[ACP] + H2O. Involved in unsaturated fatty acids biosynthesis. Catalyzes the dehydration of short chain beta-hydroxyacyl-ACPs and long chain saturated and unsaturated beta-hydroxyacyl-ACPs. The protein is 3-hydroxyacyl-[acyl-carrier-protein] dehydratase FabZ of Symbiobacterium thermophilum (strain DSM 24528 / JCM 14929 / IAM 14863 / T).